The sequence spans 236 residues: uncharacterized protein (236 aa).

Residues 4 to 225 (LLEASIEQAG…TGLEGQSLLD (222 aa)) enclose the ABC transporter domain. 38–45 (GANGAGKS) contacts ATP.

It belongs to the ABC transporter superfamily.

This is an uncharacterized protein from Bacillus subtilis (strain 168).